The primary structure comprises 474 residues: MKGVGTEIGTIHFVGIGGIGMSGIAEVMHNMGYSVQGSDMAESYVVEGLRSRGIKVMIGQKAENVAGVAVVVTSTAVKRDNPEVVAALENRIPVVRRAEMLAELMRLKSTVAVAGTHGKTTTTSMVACLLDAGGIDPTVINGGIINSYGSNARLGDSDWMVVEADESDGSFLRLDGTLAVVTNIDPEHLDHYGSFERVKSAFVEFIENVPFYGAAMLCIDHPEVQAIIPKVRDRRVVTYGFSAQADVRGEGVTPIPGGNRFTAVLRQRDGSFRRIEGIELPMPGRHNVQNALAAVAVAVEMGVSDELIRGGFAKFGGVKRRFTKVGEVDIGSGAVTIIDDYGHHPVEIRAVLAAAREGVQGRVIAVVQPHRFTRLRDHMDEFQGAFNDADVVYAAPVYPAGEQPIEGVDSAAMVEGIKARGHRSAHLTTGADELAKELAATVQAGDMVVCLGAGDITKWAAGLADAIARERAGA.

115 to 121 provides a ligand contact to ATP; that stretch reads GTHGKTT.

Belongs to the MurCDEF family.

The protein localises to the cytoplasm. It catalyses the reaction UDP-N-acetyl-alpha-D-muramate + L-alanine + ATP = UDP-N-acetyl-alpha-D-muramoyl-L-alanine + ADP + phosphate + H(+). It functions in the pathway cell wall biogenesis; peptidoglycan biosynthesis. Its function is as follows. Cell wall formation. In Novosphingobium aromaticivorans (strain ATCC 700278 / DSM 12444 / CCUG 56034 / CIP 105152 / NBRC 16084 / F199), this protein is UDP-N-acetylmuramate--L-alanine ligase.